Consider the following 524-residue polypeptide: Phosphoenolpyruvate carboxykinase (ATP) (524 aa).

Substrate-binding residues include Arg52, Tyr188, and Lys194. Residues Lys194, His213, and 229 to 237 (GLSGTGKTT) contribute to the ATP site. Mn(2+)-binding residues include Lys194 and His213. Asp250 provides a ligand contact to Mn(2+). 3 residues coordinate ATP: Glu278, Arg314, and Thr439. Arg314 contributes to the substrate binding site.

Belongs to the phosphoenolpyruvate carboxykinase (ATP) family. The cofactor is Mn(2+).

The protein localises to the cytoplasm. The catalysed reaction is oxaloacetate + ATP = phosphoenolpyruvate + ADP + CO2. It functions in the pathway carbohydrate biosynthesis; gluconeogenesis. In terms of biological role, involved in the gluconeogenesis. Catalyzes the conversion of oxaloacetate (OAA) to phosphoenolpyruvate (PEP) through direct phosphoryl transfer between the nucleoside triphosphate and OAA. The polypeptide is Phosphoenolpyruvate carboxykinase (ATP) (Campylobacter jejuni subsp. doylei (strain ATCC BAA-1458 / RM4099 / 269.97)).